A 319-amino-acid chain; its full sequence is tRNA (guanine-N(7)-)-methyltransferase (319 aa).

The tract at residues 1 to 44 (MSESPETPEPSPAQSPEAAPEQPQAARPVTPGSQASFGTYGGRP) is disordered. Residues 14-26 (QSPEAAPEQPQAA) are compositionally biased toward low complexity. Residues Glu103, Glu128, Asn155, and Asp178 each coordinate S-adenosyl-L-methionine. The active site involves Asp178. Residues Lys182 and Asp214 each coordinate substrate. The interval 262 to 288 (APVKEGRAPVSTEHTGPNEGVDETGGW) is disordered. 298–301 (TSFE) contacts substrate.

This sequence belongs to the class I-like SAM-binding methyltransferase superfamily. TrmB family.

The catalysed reaction is guanosine(46) in tRNA + S-adenosyl-L-methionine = N(7)-methylguanosine(46) in tRNA + S-adenosyl-L-homocysteine. The protein operates within tRNA modification; N(7)-methylguanine-tRNA biosynthesis. Functionally, catalyzes the formation of N(7)-methylguanine at position 46 (m7G46) in tRNA. The protein is tRNA (guanine-N(7)-)-methyltransferase of Arthrobacter sp. (strain FB24).